We begin with the raw amino-acid sequence, 184 residues long: ATP synthase subunit b, chloroplastic (184 aa).

A helical membrane pass occupies residues 27–49 (FATNPINLSVVLGVLIFFGKGVL).

Belongs to the ATPase B chain family. As to quaternary structure, F-type ATPases have 2 components, F(1) - the catalytic core - and F(0) - the membrane proton channel. F(1) has five subunits: alpha(3), beta(3), gamma(1), delta(1), epsilon(1). F(0) has four main subunits: a(1), b(1), b'(1) and c(10-14). The alpha and beta chains form an alternating ring which encloses part of the gamma chain. F(1) is attached to F(0) by a central stalk formed by the gamma and epsilon chains, while a peripheral stalk is formed by the delta, b and b' chains.

It localises to the plastid. Its subcellular location is the chloroplast thylakoid membrane. F(1)F(0) ATP synthase produces ATP from ADP in the presence of a proton or sodium gradient. F-type ATPases consist of two structural domains, F(1) containing the extramembraneous catalytic core and F(0) containing the membrane proton channel, linked together by a central stalk and a peripheral stalk. During catalysis, ATP synthesis in the catalytic domain of F(1) is coupled via a rotary mechanism of the central stalk subunits to proton translocation. Its function is as follows. Component of the F(0) channel, it forms part of the peripheral stalk, linking F(1) to F(0). The sequence is that of ATP synthase subunit b, chloroplastic from Amborella trichopoda.